A 59-amino-acid chain; its full sequence is uncharacterized protein (59 aa).

This is an uncharacterized protein from Torque teno tupaia virus (isolate Tbc-TTV14).